The following is a 96-amino-acid chain: NADH-ubiquinone oxidoreductase chain 4L (96 aa).

A run of 3 helical transmembrane segments spans residues 2–22 (IMFLYSSFSMILFILGLFCFV), 28–48 (LLSMLLSLEFIVLILFFMLFI), and 62–82 (MFLTFSVCEGALGLSILVSMI).

Belongs to the complex I subunit 4L family.

Its subcellular location is the mitochondrion membrane. It catalyses the reaction a ubiquinone + NADH + 5 H(+)(in) = a ubiquinol + NAD(+) + 4 H(+)(out). Its function is as follows. Core subunit of the mitochondrial membrane respiratory chain NADH dehydrogenase (Complex I) that is believed to belong to the minimal assembly required for catalysis. Complex I functions in the transfer of electrons from NADH to the respiratory chain. The immediate electron acceptor for the enzyme is believed to be ubiquinone. The chain is NADH-ubiquinone oxidoreductase chain 4L (mt:ND4L) from Drosophila nasuta F (Fruit fly).